Reading from the N-terminus, the 379-residue chain is Chaperone protein DnaJ 2 (379 aa).

Positions aspartate 4 to glycine 68 constitute a J domain. The CR-type zinc finger occupies glycine 130–arginine 212. Zn(2+)-binding residues include cysteine 143, cysteine 146, cysteine 160, cysteine 163, cysteine 186, cysteine 189, cysteine 200, and cysteine 203. CXXCXGXG motif repeat units follow at residues cysteine 143–glycine 150, cysteine 160–glycine 167, cysteine 186–alanine 193, and cysteine 200–glycine 207. A disordered region spans residues arginine 351 to serine 379. Residues glycine 358 to leucine 367 show a composition bias toward polar residues. The span at arginine 370–serine 379 shows a compositional bias: basic and acidic residues.

Belongs to the DnaJ family. Homodimer. Zn(2+) serves as cofactor.

It is found in the cytoplasm. In terms of biological role, participates actively in the response to hyperosmotic and heat shock by preventing the aggregation of stress-denatured proteins and by disaggregating proteins, also in an autonomous, DnaK-independent fashion. Unfolded proteins bind initially to DnaJ; upon interaction with the DnaJ-bound protein, DnaK hydrolyzes its bound ATP, resulting in the formation of a stable complex. GrpE releases ADP from DnaK; ATP binding to DnaK triggers the release of the substrate protein, thus completing the reaction cycle. Several rounds of ATP-dependent interactions between DnaJ, DnaK and GrpE are required for fully efficient folding. Also involved, together with DnaK and GrpE, in the DNA replication of plasmids through activation of initiation proteins. The chain is Chaperone protein DnaJ 2 from Streptomyces albus G.